Reading from the N-terminus, the 548-residue chain is Glucose-6-phosphate isomerase (548 aa).

Glu359 (proton donor) is an active-site residue. Residues His390 and Lys510 contribute to the active site.

Belongs to the GPI family.

The protein resides in the cytoplasm. The enzyme catalyses alpha-D-glucose 6-phosphate = beta-D-fructose 6-phosphate. The protein operates within carbohydrate biosynthesis; gluconeogenesis. It functions in the pathway carbohydrate degradation; glycolysis; D-glyceraldehyde 3-phosphate and glycerone phosphate from D-glucose: step 2/4. Its function is as follows. Catalyzes the reversible isomerization of glucose-6-phosphate to fructose-6-phosphate. This Gloeobacter violaceus (strain ATCC 29082 / PCC 7421) protein is Glucose-6-phosphate isomerase.